Here is an 87-residue protein sequence, read N- to C-terminus: MSEKLKIVYRPLQELSPYAHNARTHSTEQVAQLVESIKQFGWTNPVLIDEKGEIIAGHGRVMAAEMLKMDSVPVIVLSGLTDEQKQR.

The polypeptide is ParB-like nuclease domain-containing protein YnaK (ynaK) (Escherichia coli (strain K12)).